The following is a 288-amino-acid chain: Bifunctional protein FolD (288 aa).

Residues 166–168 and isoleucine 232 contribute to the NADP(+) site; that span reads GAS.

Belongs to the tetrahydrofolate dehydrogenase/cyclohydrolase family. As to quaternary structure, homodimer.

It catalyses the reaction (6R)-5,10-methylene-5,6,7,8-tetrahydrofolate + NADP(+) = (6R)-5,10-methenyltetrahydrofolate + NADPH. The catalysed reaction is (6R)-5,10-methenyltetrahydrofolate + H2O = (6R)-10-formyltetrahydrofolate + H(+). It functions in the pathway one-carbon metabolism; tetrahydrofolate interconversion. Functionally, catalyzes the oxidation of 5,10-methylenetetrahydrofolate to 5,10-methenyltetrahydrofolate and then the hydrolysis of 5,10-methenyltetrahydrofolate to 10-formyltetrahydrofolate. In Salmonella enteritidis PT4 (strain P125109), this protein is Bifunctional protein FolD.